We begin with the raw amino-acid sequence, 511 residues long: Probable cytosol aminopeptidase (511 aa).

2 residues coordinate Mn(2+): K255 and D260. K267 is a catalytic residue. Mn(2+) contacts are provided by D278, D337, and E339. Residue R341 is part of the active site. The disordered stretch occupies residues 485 to 511; sequence GAAQAVSPKKAARKEPGAAARKARSAQ.

It belongs to the peptidase M17 family. Mn(2+) serves as cofactor.

It is found in the cytoplasm. It catalyses the reaction Release of an N-terminal amino acid, Xaa-|-Yaa-, in which Xaa is preferably Leu, but may be other amino acids including Pro although not Arg or Lys, and Yaa may be Pro. Amino acid amides and methyl esters are also readily hydrolyzed, but rates on arylamides are exceedingly low.. It carries out the reaction Release of an N-terminal amino acid, preferentially leucine, but not glutamic or aspartic acids.. Presumably involved in the processing and regular turnover of intracellular proteins. Catalyzes the removal of unsubstituted N-terminal amino acids from various peptides. The sequence is that of Probable cytosol aminopeptidase from Variovorax paradoxus (strain S110).